The sequence spans 417 residues: RH-like protein ID (417 aa).

The next 11 membrane-spanning stretches (helical) occupy residues 12-32 (CLPLCALTLEAALTLLFYFFT), 44-64 (LVASYQVGQDLTVMAAIGFGF), 77-97 (VAFNLFMLALGVQWAILLDGF), 125-145 (ISAGAVLGYVNLVQLVVMVLV), 172-192 (IYVFAACFGLSVAWCLPKPLA), 203-223 (TIPSLSAMLGALFLWMFWPSF), 238-258 (VFNTYYAVAVSVVTAISVSSL), 265-285 (INMTYMHNAVLAGGVAVATSC), 287-307 (LIPSPWLAMVLGLVAGLISIG), 331-351 (NFSLLGLLGEIIYIVLLVLDT), and 358-378 (MVGFQVLVSIGELSLAIVIAL).

This sequence belongs to the ammonium transporter (TC 2.A.49) family. Rh subfamily.

It is found in the membrane. Its function is as follows. May be part of an oligomeric complex which is likely to have a transport or channel function in the erythrocyte membrane. The protein is RH-like protein ID of Gorilla gorilla gorilla (Western lowland gorilla).